Reading from the N-terminus, the 166-residue chain is uncharacterized protein (166 aa).

Functionally, this protein may be involved in virus assembly. Essential for virus function. This is an uncharacterized protein from Sulfolobus spindle-shape virus 1 (SSV1).